Here is a 1788-residue protein sequence, read N- to C-terminus: Protein Shroom3 (1788 aa).

Disordered regions lie at residues 1–25 (MMQVSQGTIGSPWHQAYHSSSSTSD), 146–174 (EVNSSSVKNRNYSRQPAYNRHSIGPHGRL), 225–263 (KAAGLHSTNTSSNAAQQPKHVHGDGHLHPVLERSPESSP), 321–367 (GAKS…KQEG), 382–401 (PDISTSSLTNDRNDQQPLRL), 469–488 (NIASSSHNKMDERSNRQADH), 498–548 (TVHA…GNKL), 727–768 (EISP…VTPT), 793–821 (TAEQKKRSYSEPEKMNEVGASESESAPLT), 876–915 (TGRRPSSQETRLLKERSQSTYFSGSIMDNQSMTSTSSMNS), 1011–1067 (SRRH…SASN), 1086–1133 (SFKN…PETK), 1171–1263 (KRGK…SEAE), 1303–1324 (DTESFSGTFVPPSPPPFPPPSL), 1404–1467 (VPAP…AKSQ), and 1507–1538 (ALKEKNQKRKAKKQIDNIIAPESEXKEEKRET). 2 stretches are compositionally biased toward polar residues: residues 147-161 (VNSSSVKNRNYSRQP) and 230-240 (HSTNTSSNAAQ). Composition is skewed to basic and acidic residues over residues 245–259 (VHGDGHLHPVLERSP) and 357–366 (SVKEREKKQE). Over residues 476–488 (NKMDERSNRQADH) the composition is skewed to basic and acidic residues. One can recognise an ASD1 domain in the interval 708 to 811 (VKDAQCKVLE…SEPEKMNEVG (104 aa)). The span at 793–808 (TAEQKKRSYSEPEKMN) shows a compositional bias: basic and acidic residues. The segment covering 893-903 (QSTYFSGSIMD) has biased composition (polar residues). Residues 904–915 (NQSMTSTSSMNS) are compositionally biased toward low complexity. Polar residues-rich tracts occupy residues 1055–1067 (EVGNKTSYASASN), 1100–1124 (ENSSTIQRSAQLENQRNTKTQSISG), and 1211–1263 (TSAQ…SEAE). Residues 1313–1323 (PPSPPPFPPPS) are compositionally biased toward pro residues. Over residues 1433–1451 (SILQSSEGNFNPSDSQSTL) the composition is skewed to polar residues. Residues 1467–1756 (QELAKEIVTK…QLRCLTESLP (290 aa)) enclose the ASD2 domain. Residues 1529–1538 (SEXKEEKRET) show a composition bias toward basic and acidic residues. A coiled-coil region spans residues 1653 to 1708 (RLARVENALSSLGEDASAEERKTWNEKKKQLCGQHEDARELKENLDRREKLVMDFL).

It belongs to the shroom family. In terms of assembly, interacts with F-actin. Interacts with ROCK1. In terms of tissue distribution, expressed in epithelial cells of the cement gland.

The protein resides in the cell junction. It localises to the adherens junction. It is found in the cytoplasm. Its subcellular location is the cytoskeleton. The protein localises to the apical cell membrane. Controls cell shape changes in the neuroepithelium during neural tube closure. Induces apical constriction in epithelial cells by promoting the apical accumulation of F-actin and myosin II, and probably by bundling stress fibers. Induces apicobasal cell elongation by redistributing gamma-tubulin and directing the assembly of robust apicobasal microtubule arrays. The sequence is that of Protein Shroom3 (shroom3) from Xenopus laevis (African clawed frog).